Consider the following 465-residue polypeptide: Uronate isomerase (465 aa).

Belongs to the metallo-dependent hydrolases superfamily. Uronate isomerase family.

It catalyses the reaction D-glucuronate = D-fructuronate. It carries out the reaction aldehydo-D-galacturonate = keto-D-tagaturonate. It participates in carbohydrate metabolism; pentose and glucuronate interconversion. In Bacillus velezensis (strain DSM 23117 / BGSC 10A6 / LMG 26770 / FZB42) (Bacillus amyloliquefaciens subsp. plantarum), this protein is Uronate isomerase.